We begin with the raw amino-acid sequence, 403 residues long: Argininosuccinate synthase (403 aa).

ATP-binding positions include 13–21 (AYSGGLDTS) and Ala40. Tyr92 and Ser97 together coordinate L-citrulline. Gly122 contributes to the ATP binding site. Positions 124, 128, and 129 each coordinate L-aspartate. Position 128 (Asn128) interacts with L-citrulline. Positions 132, 181, 190, 266, and 278 each coordinate L-citrulline.

It belongs to the argininosuccinate synthase family. Type 1 subfamily. In terms of assembly, homotetramer.

The protein resides in the cytoplasm. It carries out the reaction L-citrulline + L-aspartate + ATP = 2-(N(omega)-L-arginino)succinate + AMP + diphosphate + H(+). The protein operates within amino-acid biosynthesis; L-arginine biosynthesis; L-arginine from L-ornithine and carbamoyl phosphate: step 2/3. This is Argininosuccinate synthase from Aliivibrio fischeri (strain ATCC 700601 / ES114) (Vibrio fischeri).